Reading from the N-terminus, the 166-residue chain is Phosphopantetheine adenylyltransferase (166 aa).

A substrate-binding site is contributed by Thr9. Residues 9-10 and His17 each bind ATP; that span reads TF. Substrate contacts are provided by Lys41, Leu78, and Arg92. Residues 93–95, Glu103, and 128–134 each bind ATP; these read GLR and HQAIASK.

The protein belongs to the bacterial CoaD family. In terms of assembly, homohexamer. Mg(2+) serves as cofactor.

The protein resides in the cytoplasm. It catalyses the reaction (R)-4'-phosphopantetheine + ATP + H(+) = 3'-dephospho-CoA + diphosphate. Its pathway is cofactor biosynthesis; coenzyme A biosynthesis; CoA from (R)-pantothenate: step 4/5. Reversibly transfers an adenylyl group from ATP to 4'-phosphopantetheine, yielding dephospho-CoA (dPCoA) and pyrophosphate. The polypeptide is Phosphopantetheine adenylyltransferase (Roseobacter denitrificans (strain ATCC 33942 / OCh 114) (Erythrobacter sp. (strain OCh 114))).